Reading from the N-terminus, the 369-residue chain is Small RNA 2'-O-methyltransferase (369 aa).

3 residues coordinate S-adenosyl-L-methionine: Ser-39, Asp-57, and Ser-93. Mg(2+)-binding residues include Glu-111, Glu-114, His-115, and His-161.

This sequence belongs to the methyltransferase superfamily. HEN1 family. It depends on Mg(2+) as a cofactor.

It localises to the cytoplasm. The enzyme catalyses small RNA 3'-end nucleotide + S-adenosyl-L-methionine = small RNA 3'-end 2'-O-methylnucleotide + S-adenosyl-L-homocysteine + H(+). Functionally, methyltransferase that adds a 2'-O-methyl group at the 3'-end of piRNAs, a class of 24 to 30 nucleotide RNAs that are generated by a Dicer-independent mechanism and are primarily derived from transposons and other repeated sequence elements. This probably protects the 3'-end of piRNAs from uridylation activity and subsequent degradation. Stabilization of piRNAs is essential for gametogenesis. The sequence is that of Small RNA 2'-O-methyltransferase (henmt1) from Xenopus tropicalis (Western clawed frog).